A 1370-amino-acid chain; its full sequence is DNA-directed RNA polymerase subunit beta (1370 aa).

It belongs to the RNA polymerase beta chain family. The RNAP catalytic core consists of 2 alpha, 1 beta, 1 beta' and 1 omega subunit. When a sigma factor is associated with the core the holoenzyme is formed, which can initiate transcription.

The catalysed reaction is RNA(n) + a ribonucleoside 5'-triphosphate = RNA(n+1) + diphosphate. DNA-dependent RNA polymerase catalyzes the transcription of DNA into RNA using the four ribonucleoside triphosphates as substrates. In Syntrophobacter fumaroxidans (strain DSM 10017 / MPOB), this protein is DNA-directed RNA polymerase subunit beta.